The chain runs to 478 residues: PRAME family member 15 (478 aa).

One copy of the LRR 1; degenerate repeat lies at 99–126; it reads RWKLQVLDLQDVCENFWMVWSEAMAHGC. The stretch at 181 to 205 is one LRR 2; degenerate repeat; the sequence is HLCCKKLKILGMPFRNIRSILKMVN. The LRR 3; degenerate repeat unit spans residues 206 to 232; that stretch reads LDCIQEVEVNCKWVLPILTQFTPYLGH. The LRR 4; degenerate repeat unit spans residues 233–268; sequence MRNLQKLVLSHMDVSRYVSPEQKKEIVTQFTTQFLK. 5 LRR repeats span residues 269 to 294, 295 to 326, 327 to 347, 351 to 378, and 379 to 403; these read LRCL…LSCL, KTSL…SQLK, TLDL…QILL, AATL…ALSR, and CFEL…LLSH.

The protein belongs to the PRAME family.

The chain is PRAME family member 15 from Homo sapiens (Human).